The chain runs to 313 residues: Malate dehydrogenase (313 aa).

NAD(+) contacts are provided by residues 11–16 (GAGNIG) and Asp-35. Residues Arg-84 and Arg-90 each coordinate substrate. NAD(+) contacts are provided by residues Asn-97 and 120–122 (VTN). Positions 122 and 153 each coordinate substrate. His-177 serves as the catalytic Proton acceptor.

The protein belongs to the LDH/MDH superfamily. MDH type 3 family.

The catalysed reaction is (S)-malate + NAD(+) = oxaloacetate + NADH + H(+). Catalyzes the reversible oxidation of malate to oxaloacetate. This Ehrlichia canis (strain Jake) protein is Malate dehydrogenase.